A 179-amino-acid polypeptide reads, in one-letter code: Large ribosomal subunit protein uL5 (179 aa).

It belongs to the universal ribosomal protein uL5 family. In terms of assembly, part of the 50S ribosomal subunit; part of the 5S rRNA/L5/L18/L25 subcomplex. Contacts the 5S rRNA and the P site tRNA. Forms a bridge to the 30S subunit in the 70S ribosome.

Its function is as follows. This is one of the proteins that bind and probably mediate the attachment of the 5S RNA into the large ribosomal subunit, where it forms part of the central protuberance. In the 70S ribosome it contacts protein S13 of the 30S subunit (bridge B1b), connecting the 2 subunits; this bridge is implicated in subunit movement. Contacts the P site tRNA; the 5S rRNA and some of its associated proteins might help stabilize positioning of ribosome-bound tRNAs. In Sodalis glossinidius (strain morsitans), this protein is Large ribosomal subunit protein uL5.